The chain runs to 402 residues: D-mannonate dehydratase (402 aa).

Residues asparagine 37 and histidine 122 each coordinate substrate. Tyrosine 159 acts as the Proton donor/acceptor in catalysis. Aspartate 210 contacts Mg(2+). Histidine 212 functions as the Proton donor/acceptor in the catalytic mechanism. 2 residues coordinate Mg(2+): glutamate 236 and glutamate 262. Residues glutamate 262, arginine 283, histidine 312, aspartate 316, and glutamate 339 each coordinate substrate.

Belongs to the mandelate racemase/muconate lactonizing enzyme family. GalD subfamily. Homotetramer. The cofactor is Mg(2+).

The catalysed reaction is D-mannonate = 2-dehydro-3-deoxy-D-gluconate + H2O. It participates in carbohydrate metabolism; pentose and glucuronate interconversion. Its function is as follows. Catalyzes the dehydration of D-mannonate. Has no detectable activity with a panel of 70 other acid sugars (in vitro). The sequence is that of D-mannonate dehydratase (manD) from Novosphingobium aromaticivorans (strain ATCC 700278 / DSM 12444 / CCUG 56034 / CIP 105152 / NBRC 16084 / F199).